The primary structure comprises 294 residues: Retinoic acid receptor responder protein 1 (294 aa).

Topologically, residues 1–20 are lumenal; sequence MQPRRQRLPAPWSGPRGPRP. The helical; Signal-anchor for type III membrane protein transmembrane segment at 21-42 threads the bilayer; that stretch reads TAPLLALLLLLAPVAAPAGSGD. 2 consecutive Cystatin LXN-type domains span residues 38–153 and 173–276; these read AGSG…EKKK and EIVS…TPEE. Ser40 carries an O-linked (Xyl...) (chondroitin sulfate) serine glycan. Residues 43–294 are Cytoplasmic-facing; that stretch reads PDDPGQPQDA…AVVPTELSNF (252 aa). The interval 273–294 is disordered; it reads TPEEASGTEEGSAVVPTELSNF.

It belongs to the protease inhibitor I47 (latexin) family. As to quaternary structure, interacts with AGBL2, KIF11 and MAPRE1. Not N-glycosylated. O-glycosylated; contains chondroitin sulfate. Detected in urine (at protein level).

The protein localises to the membrane. Its subcellular location is the secreted. Functionally, inhibitor of the cytoplasmic carboxypeptidase AGBL2, may regulate the alpha-tubulin tyrosination cycle. The polypeptide is Retinoic acid receptor responder protein 1 (RARRES1) (Homo sapiens (Human)).